The sequence spans 168 residues: Cytochrome c oxidase subunit 2 (168 aa).

Over 1 to 3 (MVD) the chain is Cytoplasmic. The helical transmembrane segment at 4-38 (EHKAHKAILAYEKGWLAFSLAMLFVFIALIAYTLA) threads the bilayer. Topologically, residues 39-168 (THTAGVIPAG…NMFGTIVVKE (130 aa)) are periplasmic. His-114, Cys-149, Cys-153, and His-157 together coordinate Cu cation.

Belongs to the cytochrome c oxidase subunit 2 family.

Its subcellular location is the cell membrane. The enzyme catalyses 4 Fe(II)-[cytochrome c] + O2 + 8 H(+)(in) = 4 Fe(III)-[cytochrome c] + 2 H2O + 4 H(+)(out). Functionally, subunits I and II form the functional core of the enzyme complex. Electrons originating in cytochrome c are transferred via heme a and Cu(A) to the binuclear center formed by heme a3 and Cu(B). This is Cytochrome c oxidase subunit 2 (cbaB) from Thermus thermophilus (strain ATCC 27634 / DSM 579 / HB8).